We begin with the raw amino-acid sequence, 57 residues long: Putative secreted protein ML2569.1 (57 aa).

The first 32 residues, 1-32 (MSRIVAPAAASVVVGLLLGAATIFGMTLMVQQ), serve as a signal peptide directing secretion. The interval 34–57 (TKPPLPGGDPQSSVLNRVEYGNRT) is disordered.

This chain is Putative secreted protein ML2569.1, found in Mycobacterium leprae (strain TN).